The chain runs to 342 residues: MTTMLTTPLSGWSQLSLSFLTLTVGALALIVVLYISIDRFPAPRWLSKKYQLIGQKDPASTTSLECPYSYIRQIYGHYHWAPFVHKLSPTLQYDDPAKYKMVLEIMDAIHLCLMLVDDISDGSDFRKGRPAAHRIYGPSETANRAYLRVTQILNQTTSGFPHLAPWLMRDLENILEGQDLSLVWRRDGLKNFPTAPLERAAAYQRMASLKTGSLFRLLGHLVLEDRSMDDTMTLVAWYSQLQNDCKNVYSTEYAKMKGAIAEDLSNGELSYPIVLAMNAPDGHWVDLALQSPSPWNVRNALRVIRSDKVHQMCMAEMAESSSSIQDWLALWGRKEKLDLKSV.

A helical membrane pass occupies residues 17–37 (LSFLTLTVGALALIVVLYISI). Histidine 110 contributes to the isopentenyl diphosphate binding site. Mg(2+)-binding residues include aspartate 117 and aspartate 121. Dimethylallyl diphosphate is bound at residue arginine 126. An N-linked (GlcNAc...) asparagine glycan is attached at asparagine 154. Dimethylallyl diphosphate is bound by residues lysine 210, threonine 211, glutamine 240, asparagine 247, and lysine 257.

This sequence belongs to the FPP/GGPP synthase family.

It localises to the membrane. It participates in secondary metabolite biosynthesis. In terms of biological role, prenyl transferase; part of the gene cluster that mediates the biosynthesis of the indole diterpenes penitrems. The geranylgeranyl diphosphate (GGPP) synthase ptmG catalyzes the first step in penitrem biosynthesis via conversion of farnesyl pyrophosphate and isopentyl pyrophosphate into geranylgeranyl pyrophosphate (GGPP). Condensation of indole-3-glycerol phosphate with GGPP by the prenyl transferase ptmC then forms 3-geranylgeranylindole (3-GGI). Epoxidation by the FAD-dependent monooxygenase ptmM leads to a epoxidized-GGI that is substrate of the terpene cyclase ptmB for cyclization to yield paspaline. Paspaline is subsequently converted to 13-desoxypaxilline by the cytochrome P450 monooxygenase ptmP, the latter being then converted to paxilline by the cytochrome P450 monooxygenase ptmQ. Paxilline is converted to beta-paxitriol via C-10 ketoreduction by the short-chain dehydrogenase ptmH which can be monoprenylated at the C-20 by the indole diterpene prenyltransferase ptmD. A two-step elimination (acetylation and elimination) process performed by the O-acetyltransferase ptmV and ptmI leads to the production of the prenylated form of penijanthine. The FAD-linked oxidoreductase ptmO then converts the prenylated form of penijanthine into PC-M5 which is in turn transformed into PC-M4 by the aromatic dimethylallyltransferase ptmE. Five sequential oxidative transformations performed by the cytochrome P450 monooxygenases ptmK, ptmU, ptmL, ptmN and ptmJ yield the various penitrem compounds. PtmK, ptmU and ptmM are involved in the formation of the key bicyclic ring of penitrem C via the formation of the intermediates secopenitrem D and penitrem D. PtmL catalyzes the epoxidation of penitrem D and C to yield penitrem B and F, respectively. PtmJ catalyzes the last benzylic hydroxylation to convert penitrem B to prenitrem E and penitrem F to penitrem A. The protein is Prenyl transferase ptmC of Penicillium ochrochloron.